A 137-amino-acid polypeptide reads, in one-letter code: Sch210972 biosynthesis cluster protein E (137 aa).

A compositionally biased stretch (polar residues) spans 1-12 (MTKYTSVNSSLP). A disordered region spans residues 1–137 (MTKYTSVNSS…ASTIRPPCCG (137 aa)). The segment covering 15–27 (PRQTTPTRPATQT) has biased composition (low complexity). A compositionally biased stretch (polar residues) spans 51-71 (GSLNGSPTLRTTLDTSLSGTR). Basic and acidic residues predominate over residues 94 to 109 (DEDHPHDPGPDSDAKK).

It participates in secondary metabolite biosynthesis. In terms of biological role, part of the gene cluster that mediates the biosynthesis of the tetramic acid Sch210972, a potential anti-HIV fungal natural product that contains a decalin core. The PKS module of cghG together with the enoylreductase cghC catalyze the formation of the polyketide unit which is then conjugated to 4-hydroxyl-4-methyl glutamate (HMG) by the condensation domain of the cghG NRPS module. One unique structural feature of Sch210972 is the tetramic acid motif proposed to be derived from the non-proteinogenic amino acid HMG, by a Dieckmann-type condensation catalyzed by the reductase domain of cghG. The aldolase cghB catalyzes the aldol condensation of 2 molecules of pyruvic acid to yield the intermediate 4-hydroxyl-4-methyl-2-oxoglutarate (HMOG), which can then be stereoselectively transaminated by an unidentified enzyme to form HMG. The Diels-Alderase cghA then uses the Dieckmann product released by cghG as substrate and catalyzes the Diels-Alder cycloaddition to form the decalin ring of Sch210972. CghA also suppresses the nonenzymatic formation of the alternative stereoisomer. This Chaetomium globosum (strain ATCC 6205 / CBS 148.51 / DSM 1962 / NBRC 6347 / NRRL 1970) (Soil fungus) protein is Sch210972 biosynthesis cluster protein E.